Here is a 119-residue protein sequence, read N- to C-terminus: Large ribosomal subunit protein uL18 (119 aa).

It belongs to the universal ribosomal protein uL18 family. As to quaternary structure, part of the 50S ribosomal subunit; part of the 5S rRNA/L5/L18/L25 subcomplex. Contacts the 5S and 23S rRNAs.

In terms of biological role, this is one of the proteins that bind and probably mediate the attachment of the 5S RNA into the large ribosomal subunit, where it forms part of the central protuberance. In Mesorhizobium japonicum (strain LMG 29417 / CECT 9101 / MAFF 303099) (Mesorhizobium loti (strain MAFF 303099)), this protein is Large ribosomal subunit protein uL18.